Reading from the N-terminus, the 226-residue chain is Cytidylate kinase (226 aa).

Residue 11 to 19 (GPASAGKST) coordinates ATP.

Belongs to the cytidylate kinase family. Type 1 subfamily.

It is found in the cytoplasm. It carries out the reaction CMP + ATP = CDP + ADP. The catalysed reaction is dCMP + ATP = dCDP + ADP. The sequence is that of Cytidylate kinase from Pediococcus pentosaceus (strain ATCC 25745 / CCUG 21536 / LMG 10740 / 183-1w).